The following is a 221-amino-acid chain: Vacuolar protein sorting-associated protein 20 (221 aa).

Gly2 carries N-myristoyl glycine lipidation. The stretch at 72–178 forms a coiled coil; the sequence is QEHLLQQASD…LNPEKMNNAK (107 aa). Residues 170-221 form a disordered region; it reads NPEKMNNAKVANMPSTEGLPSLPQGEQTEQKEREEFATEERSDTKEPLALLS. Residues 197–215 are compositionally biased toward basic and acidic residues; it reads TEQKEREEFATEERSDTKE.

The protein belongs to the SNF7 family. Core component of the ESCRT-III complex (endosomal sorting required for transport complex III). ESCRT-III appears to be sequentially assembled as a flat lattice on the endosome membrane and forms a transient 450 kDa complex that contains DID4, oligomerized SNF7, VPS20 and VPS24. SNF7 oligomerization into a membrane-associated filament is nucleated by association of SNF7 with VPS20; the process is terminated through association of VPS24, possibly by capping the SNF7 filament. VPS24 subsequently associates with DID4/VPS2. Interacts with the VPS4. Interacts with VPS25; the interaction mediates the association with the ESCRT-II complex.

The protein resides in the endosome membrane. The protein localises to the vacuole membrane. Its function is as follows. Class E VPS protein implicated in concentration and sorting of cargo proteins of the multivesicular body (MVB) for incorporation into intralumenal vesicles. The lumenal sequestrated membrane proteins will be targeted into the vacuole after fusion of the endosome with the vacuole. Acts a component of the ESCRT-III complex, which appears to be critical for late steps in MVB sorting, such as membrane invagination and final cargo sorting and recruitment of late-acting components of the sorting machinery. The MVB pathway requires the sequential function of ESCRT-O, -I,-II and -III complex assemblies. Required for the oligomerization of SNF7 into a membrane-associated filament. The VPS20-SNF7 subcomplex is responsible for the membrane association of the ESCRT-III complex. Also required for the RIM101 repressor proteolytic activation. This is Vacuolar protein sorting-associated protein 20 (VPS20) from Saccharomyces cerevisiae (strain ATCC 204508 / S288c) (Baker's yeast).